The following is a 1164-amino-acid chain: Hamartin (1164 aa).

Residue Lys-30 forms a Glycyl lysine isopeptide (Lys-Gly) (interchain with G-Cter in ubiquitin) linkage. The tract at residues 403–787 is mediates interaction with WDR45B; sequence SDDYVHISLP…QIRQLQHDRE (385 aa). The interval 439–571 is disordered; the sequence is LNDRGSEEPP…ADESPAGDRE (133 aa). A compositionally biased stretch (basic and acidic residues) spans 474–487; it reads EKDKEEAAISRELS. A phosphoserine mark is found at Ser-487, Ser-505, Ser-511, Ser-521, and Ser-598. The segment covering 513–530 has biased composition (polar residues); sequence PGSQRKTHSAASSSQGAS. Residues 721–997 adopt a coiled-coil conformation; that stretch reads RKVIKAAALE…AAEERLDCCN (277 aa). Positions 1006–1085 are disordered; it reads GHNEEASGHN…TTVGSLPSSK (80 aa). Basic and acidic residues predominate over residues 1007–1020; it reads HNEEASGHNGETKT. A compositionally biased stretch (polar residues) spans 1073-1085; it reads SIPTTVGSLPSSK. Phosphoserine is present on Ser-1100. Positions 1131 to 1164 are disordered; sequence IPLNLDGPHPSPPTPDSVGQLHIMDYNETHHEHS. Positions 1155–1164 are enriched in basic and acidic residues; it reads DYNETHHEHS.

In terms of assembly, component of the TSC-TBC complex (also named Rhebulator complex), composed of 2 molecules of TSC1, 2 molecules of TSC2 and 1 molecule of TBC1D7. Probably forms a complex composed of chaperones HSP90 and HSP70, co-chaperones STIP1/HOP, CDC37, PPP5C, PTGES3/p23, TSC1 and client protein TSC2. Forms a complex composed of chaperones HSP90 and HSP70, co-chaperones CDC37, PPP5C, TSC1 and client protein TSC2, CDK4, AKT, RAF1 and NR3C1; this complex does not contain co-chaperones STIP1/HOP and PTGES3/p23. Forms a complex containing HSP90AA1, TSC1 and TSC2; TSC1 is required to recruit TCS2 to the complex. Interacts (via C-terminus) with the closed form of HSP90AA1 (via the middle domain and TPR repeat-binding motif). Interacts with DOCK7. Interacts with FBXW5. Interacts with WDR45B. Interacts with RPAP3 and URI1. Phosphorylation at Ser-505 does not affect interaction with TSC2. Post-translationally, 'Lys-63'-linked ubiquitinated at Lys-30 by PELI1; the ubiquitination promotes TSC1/TSC2 complex stability. Highly expressed in skeletal muscle, followed by heart, brain, placenta, pancreas, lung, liver and kidney. Also expressed in embryonic kidney cells.

Its subcellular location is the lysosome membrane. It localises to the cytoplasm. It is found in the cytosol. In terms of biological role, non-catalytic component of the TSC-TBC complex, a multiprotein complex that acts as a negative regulator of the canonical mTORC1 complex, an evolutionarily conserved central nutrient sensor that stimulates anabolic reactions and macromolecule biosynthesis to promote cellular biomass generation and growth. The TSC-TBC complex acts as a GTPase-activating protein (GAP) for the small GTPase RHEB, a direct activator of the protein kinase activity of mTORC1. In absence of nutrients, the TSC-TBC complex inhibits mTORC1, thereby preventing phosphorylation of ribosomal protein S6 kinase (RPS6KB1 and RPS6KB2) and EIF4EBP1 (4E-BP1) by the mTORC1 signaling. The TSC-TBC complex is inactivated in response to nutrients, relieving inhibition of mTORC1. Within the TSC-TBC complex, TSC1 stabilizes TSC2 and prevents TSC2 self-aggregation. Acts as a tumor suppressor. Involved in microtubule-mediated protein transport via its ability to regulate mTORC1 signaling. Also acts as a co-chaperone for HSP90AA1 facilitating HSP90AA1 chaperoning of protein clients such as kinases, TSC2 and glucocorticoid receptor NR3C1. Increases ATP binding to HSP90AA1 and inhibits HSP90AA1 ATPase activity. Competes with the activating co-chaperone AHSA1 for binding to HSP90AA1, thereby providing a reciprocal regulatory mechanism for chaperoning of client proteins. Recruits TSC2 to HSP90AA1 and stabilizes TSC2 by preventing the interaction between TSC2 and ubiquitin ligase HERC1. This chain is Hamartin, found in Homo sapiens (Human).